The following is a 585-amino-acid chain: Neopullulanase 2 (585 aa).

Ca(2+)-binding residues include Asn-143, Asp-145, Asn-148, Asp-149, Gly-169, and Asp-171. Residues His-244 and Arg-323 each coordinate substrate. Asp-325 serves as the catalytic Nucleophile. Glu-354 functions as the Proton donor in the catalytic mechanism. Substrate is bound by residues His-420–Asp-421, Asp-465, and Arg-469.

It belongs to the glycosyl hydrolase 13 family. As to quaternary structure, monomer. Requires Ca(2+) as cofactor.

It carries out the reaction Hydrolysis of pullulan to panose (6-alpha-D-glucosylmaltose).. Its function is as follows. Hydrolyzes pullulan efficiently but only a small amount of starch. Endohydrolysis of 1,4-alpha-glucosidic linkages in pullulan to form panose. Also cleaves (1-6)-alpha-glucosidic linkages to form maltotriose. The protein is Neopullulanase 2 (tvaII) of Thermoactinomyces vulgaris.